A 410-amino-acid polypeptide reads, in one-letter code: 3-phenylpropionate/cinnamic acid dioxygenase ferredoxin--NAD(+) reductase component (410 aa).

5-36 (TIIIVGGGQAAAMAAASLRQQGFTGELHLFSD) serves as a coordination point for FAD. 146–184 (SVVIVGAGTIGLELAASATQRSAAQRSAAQRRCKVTVIE) contacts NAD(+).

It belongs to the bacterial ring-hydroxylating dioxygenase ferredoxin reductase family. In terms of assembly, this dioxygenase system consists of four proteins: the two subunits of the hydroxylase component (HcaE and HcaF), a ferredoxin (HcaC) and a ferredoxin reductase (HcaD). The cofactor is FAD.

The catalysed reaction is 2 reduced [2Fe-2S]-[ferredoxin] + NAD(+) + H(+) = 2 oxidized [2Fe-2S]-[ferredoxin] + NADH. The protein operates within aromatic compound metabolism; 3-phenylpropanoate degradation. In terms of biological role, part of the multicomponent 3-phenylpropionate dioxygenase, that converts 3-phenylpropionic acid (PP) and cinnamic acid (CI) into 3-phenylpropionate-dihydrodiol (PP-dihydrodiol) and cinnamic acid-dihydrodiol (CI-dihydrodiol), respectively. The sequence is that of 3-phenylpropionate/cinnamic acid dioxygenase ferredoxin--NAD(+) reductase component from Shigella flexneri serotype 5b (strain 8401).